The following is a 276-amino-acid chain: Rhomboid protease GlpG (276 aa).

6 helical membrane-spanning segments follow: residues 94–114, 142–162, 169–189, 192–212, 229–249, and 250–270; these read GPFT…MNVV, ALMH…WYLG, LGSG…GYVQ, FSGP…GYAW, LITF…GMSI, and ANGA…ADTL. S201 acts as the Nucleophile in catalysis. The active site involves H254.

The protein belongs to the peptidase S54 family.

The protein resides in the cell inner membrane. The catalysed reaction is Cleaves type-1 transmembrane domains using a catalytic dyad composed of serine and histidine that are contributed by different transmembrane domains.. Functionally, rhomboid-type serine protease that catalyzes intramembrane proteolysis. The sequence is that of Rhomboid protease GlpG from Enterobacter sp. (strain 638).